A 306-amino-acid chain; its full sequence is MEVTFFGTSAGLPTKERNTQAIALNLEPYSNSIWLFDVGEGTQHQILHHAIKLGKVTHIFITHMHGDHIFGLPGLLSSRSFQGGEQKPLTLVGPKGIKAYVEMSMNLSESHLNYPITYIEIDDHLTYHHDGFTVEAHLLNHGIPSYGYRVMAPETTGTINVEALKNIGLEPGPKYQEVKSHDTFEHNGQVYQSKDFRGESKQGPIVAIFGDTKPCSNERVISRDADVMVHEATYIDGEKHLANNYHHSHIEDVFALIKEANVKRTLITHLSNRYNTEDINEIYQTLIQNEDTPNFNFVKDFDSFKI.

His-63, His-65, Asp-67, His-68, His-141, Asp-211, and His-269 together coordinate Zn(2+). Asp-67 (proton acceptor) is an active-site residue.

Belongs to the RNase Z family. As to quaternary structure, homodimer. Zn(2+) is required as a cofactor.

It carries out the reaction Endonucleolytic cleavage of RNA, removing extra 3' nucleotides from tRNA precursor, generating 3' termini of tRNAs. A 3'-hydroxy group is left at the tRNA terminus and a 5'-phosphoryl group is left at the trailer molecule.. Zinc phosphodiesterase, which displays some tRNA 3'-processing endonuclease activity. Probably involved in tRNA maturation, by removing a 3'-trailer from precursor tRNA. The polypeptide is Ribonuclease Z (Staphylococcus aureus (strain bovine RF122 / ET3-1)).